An 83-amino-acid polypeptide reads, in one-letter code: Small ribosomal subunit protein bS18 (83 aa).

The protein belongs to the bacterial ribosomal protein bS18 family. As to quaternary structure, part of the 30S ribosomal subunit. Forms a tight heterodimer with protein bS6.

Functionally, binds as a heterodimer with protein bS6 to the central domain of the 16S rRNA, where it helps stabilize the platform of the 30S subunit. This is Small ribosomal subunit protein bS18 from Tropheryma whipplei (strain TW08/27) (Whipple's bacillus).